The primary structure comprises 448 residues: Methylenetetrahydrofolate--tRNA-(uracil-5-)-methyltransferase TrmFO (448 aa).

Residue 13-18 participates in FAD binding; sequence GAGLAG.

Belongs to the MnmG family. TrmFO subfamily. It depends on FAD as a cofactor.

The protein localises to the cytoplasm. The catalysed reaction is uridine(54) in tRNA + (6R)-5,10-methylene-5,6,7,8-tetrahydrofolate + NADH + H(+) = 5-methyluridine(54) in tRNA + (6S)-5,6,7,8-tetrahydrofolate + NAD(+). It catalyses the reaction uridine(54) in tRNA + (6R)-5,10-methylene-5,6,7,8-tetrahydrofolate + NADPH + H(+) = 5-methyluridine(54) in tRNA + (6S)-5,6,7,8-tetrahydrofolate + NADP(+). In terms of biological role, catalyzes the folate-dependent formation of 5-methyl-uridine at position 54 (M-5-U54) in all tRNAs. The sequence is that of Methylenetetrahydrofolate--tRNA-(uracil-5-)-methyltransferase TrmFO from Streptococcus pyogenes serotype M3 (strain ATCC BAA-595 / MGAS315).